The chain runs to 114 residues: Ribosome-binding factor A (114 aa).

It belongs to the RbfA family. As to quaternary structure, monomer. Binds 30S ribosomal subunits, but not 50S ribosomal subunits or 70S ribosomes.

It is found in the cytoplasm. Its function is as follows. One of several proteins that assist in the late maturation steps of the functional core of the 30S ribosomal subunit. Associates with free 30S ribosomal subunits (but not with 30S subunits that are part of 70S ribosomes or polysomes). Required for efficient processing of 16S rRNA. May interact with the 5'-terminal helix region of 16S rRNA. This chain is Ribosome-binding factor A, found in Macrococcus caseolyticus (strain JCSC5402) (Macrococcoides caseolyticum).